A 295-amino-acid chain; its full sequence is Multistep phosphorelay regulator 1 (295 aa).

The segment at 89–110 is disordered; that stretch reads KSENNQQLAANETAGAPEGTEE. Low complexity predominate over residues 97 to 106; sequence AANETAGAPE. Positions 182 to 284 constitute an HPt domain; the sequence is EHEFSKSIVW…NDFYKDARAY (103 aa). Histidine 221 bears the Phosphohistidine mark.

Functionally, binds to the msc4 response regulator which is part of a multistep phosphorelay system that transmits oxidative stress signals to the spc1 MAPK cascade. The sequence is that of Multistep phosphorelay regulator 1 (mpr1) from Schizosaccharomyces pombe (strain 972 / ATCC 24843) (Fission yeast).